The chain runs to 386 residues: Palmitoyltransferase ZDHHC18 (386 aa).

The segment at 1–65 (MKDCEYQQIS…GSGSLGRRPR (65 aa)) is disordered. Over 1-88 (MKDCEYQQIS…CGGRLMLAGH (88 aa)) the chain is Cytoplasmic. Ser19 is modified (phosphoserine). The span at 27–40 (PAAPPGPSPGPAPG) shows a compositional bias: pro residues. Positions 49–59 (SGSGSGSGSGS) are enriched in gly residues. Residues 89–109 (GGVFALTLLLILSTTILFFIF) form a helical membrane-spanning segment. The Lumenal portion of the chain corresponds to 110–117 (DCPYLART). Residues 118–138 (LTLAIPIIAAILFFFVMSCLL) form a helical membrane-spanning segment. The Cytoplasmic portion of the chain corresponds to 139-233 (QTSFTDPGIL…GNCVGRRNYR (95 aa)). One can recognise a DHHC domain in the interval 190-240 (KYCFTCKMFRPPRTSHCSVCDNCVERFDHHCPWVGNCVGRRNYRFFYAFIL). Cys220 (S-palmitoyl cysteine intermediate) is an active-site residue. Residues 234-254 (FFYAFILSLSFLTAFIFACVV) form a helical membrane-spanning segment. The Lumenal portion of the chain corresponds to 255-275 (THLTLLSQGSNFLSALNKTPA). The chain crosses the membrane as a helical span at residues 276–296 (GVLELVICFFSIWSILGLSGF). At 297–386 (HTYLVASNLT…PDASMVGGHP (90 aa)) the chain is on the cytoplasmic side. Positions 362 to 386 (LPSPIRSDEPACGAKPDASMVGGHP) are disordered.

This sequence belongs to the DHHC palmitoyltransferase family. ERF2/ZDHHC9 subfamily.

It is found in the golgi apparatus membrane. It catalyses the reaction L-cysteinyl-[protein] + hexadecanoyl-CoA = S-hexadecanoyl-L-cysteinyl-[protein] + CoA. Functionally, palmitoyltransferase that catalyzes the addition of palmitate onto various protein substrates, such as CGAS, HRAS and LCK. Acts as a negative regulator of the cGAS-STING pathway be mediating palmitoylation and inactivation of CGAS. May also have a palmitoyltransferase activity toward the beta-2 adrenergic receptor/ADRB2 and therefore regulate G protein-coupled receptor signaling. This chain is Palmitoyltransferase ZDHHC18, found in Rattus norvegicus (Rat).